The primary structure comprises 964 residues: A-type ATP synthase subunit A (964 aa).

In terms of domain architecture, DOD-type homing endonuclease spans 392–518; the sequence is FLGYLMANGT…LSYLFAKLGI (127 aa).

This sequence belongs to the ATPase alpha/beta chains family. Has multiple subunits with at least A(3), B(3), C, D, E, F, H, I and proteolipid K(x). In terms of processing, this protein undergoes a protein self splicing that involves a post-translational excision of the VDE intervening region (intein) followed by peptide ligation.

The protein resides in the cell membrane. It catalyses the reaction ATP + H2O + 4 H(+)(in) = ADP + phosphate + 5 H(+)(out). Component of the A-type ATP synthase that produces ATP from ADP in the presence of a proton gradient across the membrane. The A chain is the catalytic subunit. In Pyrococcus horikoshii (strain ATCC 700860 / DSM 12428 / JCM 9974 / NBRC 100139 / OT-3), this protein is A-type ATP synthase subunit A.